The primary structure comprises 1253 residues: MAAQVTLEDALSNVDLLEELPLPDQQPCIEPPPSSLLYQPNFNTNFEDRNAFVTGIARYIEQATVHSSMNEMLEEGQEYAVMLYTWRSCSRAIPQVKCNEQPNRVEIYEKTVEVLEPEVTKLMNFMYFQRNAIERFCGEVRRLCHAERRKDFVSEAYLITLGKFINMFAVLDELKNMKCSVKNDHSAYKRAAQFLRKMADPQSIQESQNLSMFLANHNKITQSLQQQLEVISGYEELLADIVNLCVDYYENRMYLTPSEKHMLLKVMGFGLYLMDGSVSNIYKLDAKKRINLSKIDKYFKQLQVVPLFGDMQIELARYIKTSAHYEENKSRWTCTSSGSSPQYNICEQMIQIREDHMRFISELARYSNSEVVTGSGRQEAQKTDAEYRKLFDLALQGLQLLSQWSAHVMEVYSWKLVHPTDKYSNKDCPDSAEEYERATRYNYTSEEKFALVEVIAMIKGLQVLMGRMESVFNHAIRHTVYAALQDFSQVTLREPLRQAIKKKKNVIQSVLQAIRKTVCDWETGHEPFNDPALRGEKDPKSGFDIKVPRRAVGPSSTQLYMVRTMLESLIADKSGSKKTLRSSLEGPTILDIEKFHRESFFYTHLINFSETLQQCCDLSQLWFREFFLELTMGRRIQFPIEMSMPWILTDHILETKEASMMEYVLYSLDLYNDSAHYALTRFNKQFLYDEIEAEVNLCFDQFVYKLADQIFAYYKVMAGSLLLDKRLRSECKNQGATIHLPPSNRYETLLKQRHVQLLGRSIDLNRLITQRVSAAMYKSLELAIGRFESEDLTSIVELDGLLEINRMTHKLLSRYLTLDGFDAMFREANHNVSAPYGRITLHVFWELNYDFLPNYCYNGSTNRFVRTVLPFSQEFQRDKQPNAQPQYLHGSKALNLAYSSIYGSYRNFVGPPHFQVICRLLGYQGIAVVMEELLKVVKSLLQGTILQYVKTLMEVMPKICRLPRHEYGSPGILEFFHHQLKDIVEYAELKTVCFQNLREVGNAILFCLLIEQSLSLEEVCDLLHAAPFQNILPRVHVKEGERLDAKMKRLESKYAPLHLVPLIERLGTPQQIAIAREGDLLTKERLCCGLSMFEVILTRIRSFLDDPIWRGPLPSNGVMHVDECVEFHRLWSAMQFVYCIPVGTHEFTVEQCFGDGLHWAGCMIIVLLGQQRRFAVLDFCYHLLKVQKHDGKDEIIKNVPLKKMVERIRKFQILNDEIITILDKYLKSGDGEGTPVEHVRCFQPPIHQSLASS.

The residue at position 583 (Ser-583) is a Phosphoserine. A Phosphothreonine modification is found at Thr-1234.

The protein belongs to the CYFIP family. In terms of assembly, component of the WAVE1 complex composed of ABI2, CYFIP1 or CYFIP2, BRK1, NCKAP1 and WASF1/WAVE1. Within the complex, a heterodimer containing NCKAP1 and CYFIP1 interacts with a heterotrimer formed by WAVE1, ABI2 and BRK1. Component of the CYFIP1-EIF4E-FMR1 complex which is composed of CYFIP, EIF4E and FMR1. Interacts with FMR1 but does not bind to related proteins FXR1 or FXR2. Interaction with EIF4E stimulates FMR1 binding. Component of the WAVE2 complex composed of ABI1, CYFIP1/SRA1, NCKAP1/NAP1 (NCKAP1l/HEM1 in hematopoietic cells) and WASF2/WAVE2. Interacts with the active GTP-bound form of RAC1. Interacts through its C-terminus with the C-terminus of DPYSL2/CRMP2 which is necessary for DPYSL2-induced axon outgrowth. Interacts with NYAP1, NYAP2 and MYO16. Interacts with TMEM108 (via N-terminus); the interaction associates TMEM108 with the WAVE1 complex.

Its subcellular location is the cytoplasm. The protein resides in the perinuclear region. It localises to the cell projection. It is found in the lamellipodium. The protein localises to the ruffle. Its subcellular location is the synapse. The protein resides in the synaptosome. Component of the CYFIP1-EIF4E-FMR1 complex which binds to the mRNA cap and mediates translational repression. In the CYFIP1-EIF4E-FMR1 complex this subunit is an adapter between EIF4E and FMR1. Promotes the translation repression activity of FMR1 in brain probably by mediating its association with EIF4E and mRNA. Regulates formation of membrane ruffles and lamellipodia. Plays a role in axon outgrowth. Binds to F-actin but not to RNA. Part of the WAVE complex that regulates actin filament reorganization via its interaction with the Arp2/3 complex. Actin remodeling activity is regulated by RAC1. Regulator of epithelial morphogenesis. As component of the WAVE1 complex, required for BDNF-NTRK2 endocytic trafficking and signaling from early endosomes. May act as an invasion suppressor in cancers. The sequence is that of Cytoplasmic FMR1-interacting protein 1 from Homo sapiens (Human).